The following is a 357-amino-acid chain: Cell division control protein 10 (357 aa).

The region spanning 34–306 is the Septin-type G domain; that stretch reads RGFQFNIMVV…ETFRSKQLIA (273 aa). The interval 44–51 is G1 motif; sequence GRSGLGKS. Residues 44-51, T78, G104, 184-192, G240, and R255 each bind GTP; these read GRSGLGKS and KSDSLTLDE. The G3 motif stretch occupies residues 101-104; the sequence is DTPG. The G4 motif stretch occupies residues 183–186; that stretch reads AKSD. A disordered region spans residues 310–357; it reads NASNPNRQSQLQKDQGQTSQQSNQDLKNTSGVPNAPMFQSTTGTAAAR.

This sequence belongs to the TRAFAC class TrmE-Era-EngA-EngB-Septin-like GTPase superfamily. Septin GTPase family.

The protein localises to the bud neck. Its function is as follows. Plays a role in the cell cycle. Involved in the formation of the ring of filaments in the neck region at the mother-bud junction during mitosis. In Candida albicans (strain SC5314 / ATCC MYA-2876) (Yeast), this protein is Cell division control protein 10 (CDC10).